Here is a 187-residue protein sequence, read N- to C-terminus: Adenylate kinase (187 aa).

10 to 15 (GSGKGT) is a binding site for ATP. The NMP stretch occupies residues 30–59 (STGDMLRAEIAAGSELGKQAKAVMDAGNLV). AMP-binding positions include Thr-31, Arg-36, 57-59 (NLV), 85-88 (GYPR), and Gln-92. The tract at residues 126 to 136 (GRAKEQGRADD) is LID. Arg-127 provides a ligand contact to ATP. AMP is bound by residues Arg-133 and Arg-144. An ATP-binding site is contributed by Gly-172.

Belongs to the adenylate kinase family. In terms of assembly, monomer.

The protein resides in the cytoplasm. The enzyme catalyses AMP + ATP = 2 ADP. It participates in purine metabolism; AMP biosynthesis via salvage pathway; AMP from ADP: step 1/1. Functionally, catalyzes the reversible transfer of the terminal phosphate group between ATP and AMP. Plays an important role in cellular energy homeostasis and in adenine nucleotide metabolism. This is Adenylate kinase from Stenotrophomonas maltophilia (strain R551-3).